The following is a 63-amino-acid chain: Large ribosomal subunit protein uL29 (63 aa).

Belongs to the universal ribosomal protein uL29 family.

The protein is Large ribosomal subunit protein uL29 of Erwinia tasmaniensis (strain DSM 17950 / CFBP 7177 / CIP 109463 / NCPPB 4357 / Et1/99).